The following is a 106-amino-acid chain: Small ribosomal subunit protein bS16 (106 aa).

Belongs to the bacterial ribosomal protein bS16 family.

The polypeptide is Small ribosomal subunit protein bS16 (Wolbachia pipientis wMel).